We begin with the raw amino-acid sequence, 418 residues long: Transcription termination factor Rho (418 aa).

The region spanning 48–123 (DIYGDGVLEI…LKVNDINFDR (76 aa)) is the Rho RNA-BD domain. ATP-binding positions include 169–174 (GKGQRG), 181–186 (KAGKTM), and R212.

This sequence belongs to the Rho family. As to quaternary structure, homohexamer. The homohexamer assembles into an open ring structure.

Its function is as follows. Facilitates transcription termination by a mechanism that involves Rho binding to the nascent RNA, activation of Rho's RNA-dependent ATPase activity, and release of the mRNA from the DNA template. In Allochromatium vinosum (strain ATCC 17899 / DSM 180 / NBRC 103801 / NCIMB 10441 / D) (Chromatium vinosum), this protein is Transcription termination factor Rho.